The chain runs to 312 residues: Serine acetyltransferase 5 (312 aa).

A compositionally biased stretch (basic and acidic residues) spans 1 to 17 (MPPAGELRHQSPSKEKL). Residues 1 to 25 (MPPAGELRHQSPSKEKLSSVTQSDE) form a disordered region.

The protein belongs to the transferase hexapeptide repeat family. As to quaternary structure, homomultimer. As to expression, mostly expressed in stems, flowers and siliques. Localized in vascular tissues, particularly in phloem.

Its subcellular location is the cytoplasm. The catalysed reaction is L-serine + acetyl-CoA = O-acetyl-L-serine + CoA. It functions in the pathway amino-acid biosynthesis; L-cysteine biosynthesis; L-cysteine from L-serine: step 1/2. Feedback inhibitions by L-Ser and acetyl-CoA. In Arabidopsis thaliana (Mouse-ear cress), this protein is Serine acetyltransferase 5 (SAT5).